The sequence spans 360 residues: Olfactory receptor 1L1 (360 aa).

The Extracellular portion of the chain corresponds to 1–75 (MERNHNPDNC…GLSSRPEDQK (75 aa)). N-linked (GlcNAc...) asparagine glycosylation is present at Asn55. Residues 76–99 (PLFAVFLPIYLITVIGNLLIILAI) traverse the membrane as a helical segment. The Cytoplasmic portion of the chain corresponds to 100-107 (RSDTRLQT). The chain crosses the membrane as a helical span at residues 108–129 (PMYFFLSILSFVDICYVTVIIP). The Extracellular segment spans residues 130–150 (KMLVNFLSETKTISYSECLTQ). Cysteines 147 and 239 form a disulfide. A helical membrane pass occupies residues 151-170 (MYFFLAFGNTDSYLLAAMAI). Residues 171–189 (DRYVAICNPFHYITIMSHR) are Cytoplasmic-facing. Residues 190-208 (CCVLLLVLSFCIPHFHSLL) form a helical membrane-spanning segment. Residues 209 to 246 (HILLTNQLIFCASNVIHHFFCDDQPVLKLSCSSHFVKE) lie on the Extracellular side of the membrane. The helical transmembrane segment at 247 to 269 (ITVMTEGLAVIMTPFSCIIISYL) threads the bilayer. Residues 270-286 (RILITVLKIPSAAGKRK) are Cytoplasmic-facing. A helical transmembrane segment spans residues 287 to 309 (AFSTCGSHLTVVTLFYGSISYLY). Over 310-321 (FQPLSNYTVKDQ) the chain is Extracellular. Asn315 is a glycosylation site (N-linked (GlcNAc...) asparagine). The helical transmembrane segment at 322–341 (IATIIYTVLTPMLNPFIYSL) threads the bilayer. Residues 342 to 360 (RNKDMKQGLAKLMHRMKCQ) lie on the Cytoplasmic side of the membrane.

This sequence belongs to the G-protein coupled receptor 1 family.

It localises to the cell membrane. Odorant receptor. The sequence is that of Olfactory receptor 1L1 (OR1L1) from Homo sapiens (Human).